The chain runs to 155 residues: MSTEKINLDIHKILTLLPHRYPILLVDRVLELEPHKGIKALKNVSINEPFFQGHFPKRPVMPGVLILEALAQAAALLTFAEEQPKDPENTLYYFVGIDGARFKRVVEPGDQLILNVTFERYIRGIWKFKAVAEVDGKVAAEAELMCTVKTADAAP.

The active site involves His-54.

Belongs to the thioester dehydratase family. FabZ subfamily.

It is found in the cytoplasm. It catalyses the reaction a (3R)-hydroxyacyl-[ACP] = a (2E)-enoyl-[ACP] + H2O. Its function is as follows. Involved in unsaturated fatty acids biosynthesis. Catalyzes the dehydration of short chain beta-hydroxyacyl-ACPs and long chain saturated and unsaturated beta-hydroxyacyl-ACPs. The polypeptide is 3-hydroxyacyl-[acyl-carrier-protein] dehydratase FabZ (Burkholderia ambifaria (strain MC40-6)).